The following is a 355-amino-acid chain: Peptide chain release factor 1 (355 aa).

Q233 carries the post-translational modification N5-methylglutamine. Residues 280–293 (ERRKKEQERADSRR) show a composition bias toward basic and acidic residues. The segment at 280-306 (ERRKKEQERADSRRGQVGSGNRSERIR) is disordered.

This sequence belongs to the prokaryotic/mitochondrial release factor family. Methylated by PrmC. Methylation increases the termination efficiency of RF1.

The protein resides in the cytoplasm. Peptide chain release factor 1 directs the termination of translation in response to the peptide chain termination codons UAG and UAA. The protein is Peptide chain release factor 1 of Rickettsia africae (strain ESF-5).